The primary structure comprises 223 residues: Urease accessory protein UreF (223 aa).

Belongs to the UreF family. In terms of assembly, ureD, UreF and UreG form a complex that acts as a GTP-hydrolysis-dependent molecular chaperone, activating the urease apoprotein by helping to assemble the nickel containing metallocenter of UreC. The UreE protein probably delivers the nickel.

Its subcellular location is the cytoplasm. Required for maturation of urease via the functional incorporation of the urease nickel metallocenter. The protein is Urease accessory protein UreF of Mesorhizobium japonicum (strain LMG 29417 / CECT 9101 / MAFF 303099) (Mesorhizobium loti (strain MAFF 303099)).